Reading from the N-terminus, the 707-residue chain is MGEVVFSTWGGKVVDHRGGPSGGGPSWAGEFGGRQLKAFIGWDGLVVTDPAVDLLAALQAYYQAVQGESCGRCVPCRVGTRVIYNVLVRIAGGEGLPSDLDLLRRVAWIVRDGSLCELGQAGAKAVLDFLDYYSEALRPFLEDSGRVAGGQRRPGPGGRVQVLASGRVLVGNDRGKGAAAASPAAGLTYKPFVTAPCLKRCPAHLDIPAYIDAIKDGRYEESLAIIRQRTALAGVLGRVCVHPCEENCRRGNVDEPLAIRGLKRFVADYEVKRGRRPVAVCGGNLFTGPWRPAGQAGGEETTAVTSGKKVAIIGAGPAGLSAAYQLAGRGYKVTIFEALPVAGGMLAVGIPSYRLPRDILAGEIEAIKALGVTINLNTRVGVDVTMDQLQRDYDAVFIATGLHASSRMGVAGEDEGYGGFIPGVKFLRDLNLDRCPSLEGKVVAVVGGGNVAMDCARSALRRGAREVHLIYRRSRAEMPAHATEVRDAEAEGVIYHFLVNPTALVAEKGNIKGMQCVRMKLGEPDDSGRRRPVPVPGTEFFLPCDIVVPAIGQAADLSFLDGRIEVGKRGTISVDPVTLATSVPGVFAGGDIVLGARTVVEAVAQGNRAAVSIDQYLRQGTTSPTVEDELDAWLEKVGVYDPEEDVGIYGGRPRQAERVAPLAERVKDFREVEGGFDFYAGRAEAERCLRCYRVGMMVLAGEGESNG.

As to quaternary structure, heterotetramer composed of two alpha (FdhA) and two beta (FdhB) subunits.

It is found in the cytoplasm. The catalysed reaction is formate + NADP(+) = CO2 + NADPH. Its activity is regulated as follows. Activity is very sensitive to oxygen. The activity in growing cells is enhanced when selenite and molybdate are added together to the growth medium. Tungstate replaces and is better than molybdate. Selenite is incorporated into the enzyme. Requires a sulfhydryl compound for activity. Inhibited by cyanide, EDTA, hypophosphite and mercaptoethanol. Sulfite inhibits the activity with NADP but not with methyl viologen as electron acceptor. Its function is as follows. Component of a dehydrogenase that catalyzes the NADP-dependent reduction of CO(2) to formate, the first step in the synthesis of the methyl group of acetate during synthesis of acetate from CO(2). In vitro, can use methyl viologen and benzyl viologen in addition to its natural electron acceptor. The protein is NADP(+)-dependent formate dehydrogenase subunit beta of Moorella thermoacetica (Clostridium thermoaceticum).